We begin with the raw amino-acid sequence, 212 residues long: Response regulator SsrB (212 aa).

A required for prevention of DNA binding in absence of phosphorylation and for full stimulation of activity by acidic pH region spans residues 1-138 (MKEYKILLVD…PTLNREAILA (138 aa)). Positions 5-121 (KILLVDDHEI…VLLAALQTVA (117 aa)) constitute a Response regulatory domain. A 4-aspartylphosphate modification is found at Asp-56. The HTH luxR-type domain maps to 143–208 (DTTNHQLLTL…ELLNCARRMR (66 aa)). The H-T-H motif DNA-binding region spans 167-186 (NHGISEKLHISIKTVETHRM). S-nitrosocysteine is present on Cys-203.

In terms of assembly, homodimer; disulfide-linked; dimerizes upon DNA-binding. Post-translationally, ssrB phosphorylated on Asp-56 activates the expression of virulence genes whereas the unphosphorylated form controls biofilm formation. Independently of SsrA, can be phosphorylated by small inorganic phosphate donors (such as acetyl phosphate or phosphoramidate). In terms of processing, disulfide bond formation at Cys-203 is not required for dimerization. Cys-203 may serve as a redox sensor that is nitrosylated in presence of reactive nitrogen species (RNS) generated by the host, the modification modulates its DNA-binding activity. Cys-203 is relatively resistant to oxidation by hydrogen peroxide.

Its subcellular location is the cytoplasm. In terms of biological role, member of the two-component regulatory system SsrA/SsrB (SpiR/SsrB) that is required for intracellular proliferation and systemic dissemination within the host. When inside acidic Salmonella-containing vesicles (SCV) within host cells the SsrA sensor kinase autophosphorylates and the phosphoryl group is transferred to the response regulator SsrB; phosphorylated SsrB activates the expression of genes encoding virulence proteins, including pathogenicity island 2 (SPI2) and other horizontally acquired genes, but also ancestral genes; it can stimulate gene expression both by recruiting RNA polymerase and by antagonizing the action of the transcriptional repressor hns (H-NS). Can also act independently of sensor kinase ssrA to support the dormant carrier state by directing the transcription of factors required for biofilm formation. DNA-binding is stimulated by acidic pH conditions, and binding promotes bending of DNA both upstream and downstream of binding sites. Binds a degenerate 18-basepair palindromic sequence with a 7-4-7 internal organization, and regulates gene expression from 86 operons. When phosphorylated, activates the transcription of the ABC transporter complex dalSTUV, which helps protect the organism from oxidative killing by host neutrophils. Binds the phoP promoter to stimulate expression in acidic pH conditions. Antagonizes hns to activate the transcription of ugtL. Following invasion of host cells, binds the hilD and hilA regulatory regions to repress their transcription and consequently to repress transcription of pathogenicity island 1 (SPI1) encoding genes involved in host cell invasion. Binds the promoters of the flagellar master regulators flhD and flhC to repress their expression and consequently to suppress flagellar motility and promote evasion of the host inflammasome during infection of host cells. Activates expression of sseI/srfH, sifA, sifB, sseJ and regulates its own expression. When unphosphorylated, relieves the hns-mediated repression of master biofilm regulator csgD by binding and bending the csgD regulatory region. May act as early as in the lumen of the host small intestine, to activate the expression of virulence proteins prior to invasion of host cells. In Salmonella typhimurium (strain LT2 / SGSC1412 / ATCC 700720), this protein is Response regulator SsrB.